The sequence spans 351 residues: Ribonucleoside-diphosphate reductase subunit M2 B (351 aa).

The interval 1–31 (MGDPERPEAAGLDQDERSSSDTNENEIKSNE) is disordered. Fe cation-binding residues include Asp-100, Glu-131, and His-134. Tyr-138 is a catalytic residue. Fe cation is bound by residues Glu-194, Glu-228, and His-231.

Belongs to the ribonucleoside diphosphate reductase small chain family. In terms of assembly, heterotetramer with large (RRM1) subunit. Interacts with p53/TP53. Interacts with RRM1 in response to DNA damage. The cofactor is Fe cation.

The protein resides in the cytoplasm. Its subcellular location is the nucleus. The catalysed reaction is a 2'-deoxyribonucleoside 5'-diphosphate + [thioredoxin]-disulfide + H2O = a ribonucleoside 5'-diphosphate + [thioredoxin]-dithiol. Its function is as follows. Plays a pivotal role in cell survival by repairing damaged DNA in a p53/TP53-dependent manner. Supplies deoxyribonucleotides for DNA repair in cells arrested at G1 or G2. Contains an iron-tyrosyl free radical center required for catalysis. Forms an active ribonucleotide reductase (RNR) complex with RRM1 which is expressed both in resting and proliferating cells in response to DNA damage. This chain is Ribonucleoside-diphosphate reductase subunit M2 B (RRM2B), found in Pongo abelii (Sumatran orangutan).